Consider the following 533-residue polypeptide: CTP synthase (533 aa).

Positions 1–268 (MGETKYIFVT…DETILQKMGL (268 aa)) are amidoligase domain. Position 15 (serine 15) interacts with CTP. Serine 15 contributes to the UTP binding site. 16–21 (SLGKGI) provides a ligand contact to ATP. L-glutamine is bound at residue tyrosine 56. ATP is bound at residue aspartate 73. Positions 73 and 143 each coordinate Mg(2+). CTP-binding positions include 150 to 152 (DIE), 189 to 194 (KTKPTQ), and lysine 225. Residues 189-194 (KTKPTQ) and lysine 225 contribute to the UTP site. Positions 301–533 (YVELQDAYKS…VSFIKAAIDK (233 aa)) constitute a Glutamine amidotransferase type-1 domain. Glycine 356 serves as a coordination point for L-glutamine. Cysteine 383 functions as the Nucleophile; for glutamine hydrolysis in the catalytic mechanism. Residues 384–387 (LGMQ), glutamate 407, and arginine 464 contribute to the L-glutamine site. Active-site residues include histidine 509 and glutamate 511.

The protein belongs to the CTP synthase family. As to quaternary structure, homotetramer.

The enzyme catalyses UTP + L-glutamine + ATP + H2O = CTP + L-glutamate + ADP + phosphate + 2 H(+). It catalyses the reaction L-glutamine + H2O = L-glutamate + NH4(+). It carries out the reaction UTP + NH4(+) + ATP = CTP + ADP + phosphate + 2 H(+). Its pathway is pyrimidine metabolism; CTP biosynthesis via de novo pathway; CTP from UDP: step 2/2. Allosterically activated by GTP, when glutamine is the substrate; GTP has no effect on the reaction when ammonia is the substrate. The allosteric effector GTP functions by stabilizing the protein conformation that binds the tetrahedral intermediate(s) formed during glutamine hydrolysis. Inhibited by the product CTP, via allosteric rather than competitive inhibition. Functionally, catalyzes the ATP-dependent amination of UTP to CTP with either L-glutamine or ammonia as the source of nitrogen. Regulates intracellular CTP levels through interactions with the four ribonucleotide triphosphates. The polypeptide is CTP synthase (Bacteroides fragilis (strain YCH46)).